Consider the following 141-residue polypeptide: Large ribosomal subunit protein uL13 (141 aa).

The protein belongs to the universal ribosomal protein uL13 family. As to quaternary structure, part of the 50S ribosomal subunit.

Functionally, this protein is one of the early assembly proteins of the 50S ribosomal subunit, although it is not seen to bind rRNA by itself. It is important during the early stages of 50S assembly. This Helicobacter pylori (strain P12) protein is Large ribosomal subunit protein uL13.